The primary structure comprises 382 residues: uncharacterized protein (382 aa).

The next 12 helical transmembrane spans lie at 14-34 (GLLLLTLAIAVLNTLVLLWLA), 45-65 (MVSSSYFTGNLVGTLFTGYLI), 75-95 (YLASLIFAAGCVGLGVMVGFW), 102-122 (FIAGIGCAMIWVVVESALMCS), 131-151 (LLAAYMMVYYMGTFLGQLLVS), 157-177 (LLHVLPWVTGMILAGILPLLF), 204-224 (LGVNGCIISGIVLGSLYGLMP), 231-251 (GMANASIGFWMAVLVSAGILG), 270-290 (VQVFVVILGSIAMLTQAAMAP), 291-311 (ALFILGAAGFTLYPVAMAWAC), 325-345 (ALLLSYTVGSLLGPSFAAMLM), and 349-369 (SDNLLFIMIASVSFIYLLMLL).

It belongs to the major facilitator superfamily. YcaD (TC 2.A.1.26) family.

It is found in the cell inner membrane. This is an uncharacterized protein from Salmonella paratyphi A (strain ATCC 9150 / SARB42).